Reading from the N-terminus, the 173-residue chain is ATP-dependent protease subunit HslV (173 aa).

Residue Thr-2 is part of the active site. Residues Gly-158, Asp-161, and Ser-164 each contribute to the Na(+) site.

The protein belongs to the peptidase T1B family. HslV subfamily. A double ring-shaped homohexamer of HslV is capped on each side by a ring-shaped HslU homohexamer. The assembly of the HslU/HslV complex is dependent on binding of ATP.

Its subcellular location is the cytoplasm. The enzyme catalyses ATP-dependent cleavage of peptide bonds with broad specificity.. Allosterically activated by HslU binding. Its function is as follows. Protease subunit of a proteasome-like degradation complex believed to be a general protein degrading machinery. This Haemophilus ducreyi (strain 35000HP / ATCC 700724) protein is ATP-dependent protease subunit HslV.